Reading from the N-terminus, the 64-residue chain is Beta sliding clamp (64 aa).

The protein belongs to the beta sliding clamp family. As to quaternary structure, forms a ring-shaped head-to-tail homodimer around DNA which binds and tethers DNA polymerases and other proteins to the DNA. The DNA replisome complex has a single clamp-loading complex (3 tau and 1 each of delta, delta', psi and chi subunits) which binds 3 Pol III cores (1 core on the leading strand and 2 on the lagging strand) each with a beta sliding clamp dimer. Additional proteins in the replisome are other copies of gamma, psi and chi, Ssb, DNA helicase and RNA primase.

The protein resides in the cytoplasm. Functionally, confers DNA tethering and processivity to DNA polymerases and other proteins. Acts as a clamp, forming a ring around DNA (a reaction catalyzed by the clamp-loading complex) which diffuses in an ATP-independent manner freely and bidirectionally along dsDNA. Initially characterized for its ability to contact the catalytic subunit of DNA polymerase III (Pol III), a complex, multichain enzyme responsible for most of the replicative synthesis in bacteria; Pol III exhibits 3'-5' exonuclease proofreading activity. The beta chain is required for initiation of replication as well as for processivity of DNA replication. The sequence is that of Beta sliding clamp (dnaN) from Actinobacillus pleuropneumoniae (Haemophilus pleuropneumoniae).